Reading from the N-terminus, the 437-residue chain is Beta-1,3-galactosyl-O-glycosyl-glycoprotein beta-1,6-N-acetylglucosaminyltransferase 3 (437 aa).

Topologically, residues M1–R12 are cytoplasmic. The helical; Signal-anchor for type II membrane protein transmembrane segment at L13 to S30 threads the bilayer. The Lumenal portion of the chain corresponds to L31–L437. Intrachain disulfides connect C70-C227, C161-C381, C182-C209, and C390-C422. N-linked (GlcNAc...) asparagine glycosylation occurs at N288.

The protein belongs to the glycosyltransferase 14 family. Post-translationally, N-glycosylated.

Its subcellular location is the golgi apparatus membrane. It catalyses the reaction a 3-O-[beta-D-galactosyl-(1-&gt;3)-N-acetyl-alpha-D-galactosaminyl]-L-seryl-[protein] + UDP-N-acetyl-alpha-D-glucosamine = 3-O-{beta-D-galactosyl-(1-&gt;3)-[N-acetyl-beta-D-glucosaminyl-(1-&gt;6)]-N-acetyl-alpha-D-galactosaminyl}-L-seryl-[protein] + UDP + H(+). It carries out the reaction a 3-O-[beta-D-galactosyl-(1-&gt;3)-N-acetyl-alpha-D-galactosaminyl]-L-threonyl-[protein] + UDP-N-acetyl-alpha-D-glucosamine = a 3-O-{beta-D-galactosyl-(1-&gt;3)-[N-acetyl-beta-D-glucosaminyl-(1-&gt;6)]-N-acetyl-alpha-D-galactosaminyl}-L-threonyl-[protein] + UDP + H(+). The catalysed reaction is a beta-D-Gal-(1-&gt;4)-beta-D-GlcNAc-(1-&gt;3)-beta-D-Gal-(1-&gt;4)-beta-D-GlcNAc derivative + UDP-N-acetyl-alpha-D-glucosamine = a beta-D-Gal-(1-&gt;4)-beta-D-GlcNAc-(1-&gt;3)-[beta-D-GlcNAc-(1-&gt;6)]-beta-D-Gal-(1-&gt;4)-N-acetyl-beta-D-glucosaminyl derivative + UDP + H(+). The enzyme catalyses 3-O-[N-acetyl-beta-D-glucosaminyl-(1-&gt;3)-N-acetyl-alpha-D-galactosaminyl]-L-seryl-[protein] + UDP-N-acetyl-alpha-D-glucosamine = 3-O-[N-acetyl-beta-D-glucosaminyl-(1-&gt;3)-[N-acetyl-beta-D-glucosaminyl-(1-&gt;6)]-N-acetyl-alpha-D-galactosaminyl]-L-seryl-[protein] + UDP + H(+). It catalyses the reaction a 3-O-[N-acetyl-beta-D-glucosaminyl-(1-&gt;3)-N-acetyl-alpha-D-galactosaminyl]-L-threonyl-[protein] + UDP-N-acetyl-alpha-D-glucosamine = 3-O-[N-acetyl-beta-D-glucosaminyl-(1-&gt;3)-[N-acetyl-beta-D-glucosaminyl-(1-&gt;6)]-N-acetyl-alpha-D-galactosaminyl]-L-threonyl-[protein] + UDP + H(+). It participates in protein modification; protein glycosylation. Functionally, glycosyltransferase that can synthesize all known mucin beta 6 N-acetylglucosaminides. Mediates core 2 and core 4 O-glycan branching, 2 important steps in mucin-type biosynthesis. Also has I-branching enzyme activity by converting linear into branched poly-N-acetyllactosaminoglycans, leading to introduce the blood group I antigen during embryonic development. The chain is Beta-1,3-galactosyl-O-glycosyl-glycoprotein beta-1,6-N-acetylglucosaminyltransferase 3 (Gcnt3) from Mus musculus (Mouse).